The primary structure comprises 397 residues: 8-amino-7-oxononanoate synthase (397 aa).

Arg-23 is a substrate binding site. 110–111 provides a ligand contact to pyridoxal 5'-phosphate; the sequence is GY. His-135 is a binding site for substrate. Residues Ser-181, His-209, and Thr-237 each coordinate pyridoxal 5'-phosphate. An N6-(pyridoxal phosphate)lysine modification is found at Lys-240. Thr-354 is a substrate binding site.

The protein belongs to the class-II pyridoxal-phosphate-dependent aminotransferase family. BioF subfamily. As to quaternary structure, homodimer. Pyridoxal 5'-phosphate is required as a cofactor.

The enzyme catalyses 6-carboxyhexanoyl-[ACP] + L-alanine + H(+) = (8S)-8-amino-7-oxononanoate + holo-[ACP] + CO2. It functions in the pathway cofactor biosynthesis; biotin biosynthesis. Functionally, catalyzes the decarboxylative condensation of pimeloyl-[acyl-carrier protein] and L-alanine to produce 8-amino-7-oxononanoate (AON), [acyl-carrier protein], and carbon dioxide. This Anaeromyxobacter sp. (strain Fw109-5) protein is 8-amino-7-oxononanoate synthase.